The primary structure comprises 637 residues: Epithelial sodium channel subunit alpha (637 aa).

The tract at residues 1-34 (MGTASRGGSVKAEKMPEGEKTRQCKQETEQQQKE) is disordered. Residues 1–76 (MGTASRGGSV…VCSKKNKMKT (76 aa)) lie on the Cytoplasmic side of the membrane. Residues 11–34 (KAEKMPEGEKTRQCKQETEQQQKE) are compositionally biased toward basic and acidic residues. A helical membrane pass occupies residues 77 to 97 (AFWSVLFILTFGLMYWQFGIL). Topologically, residues 98-548 (YREYFSYPVN…NQWSLWFGSS (451 aa)) are extracellular. Intrachain disulfides connect C125–C292, C217–C224, C269–C276, C380–C465, C402–C442, C402–C461, C406–C457, C415–C442, C415–C465, and C417–C431. The chain crosses the membrane as a helical span at residues 549 to 569 (VLSVMELAELILDFTVITFIL). The Cytoplasmic segment spans residues 570 to 637 (AFRWFRSKQW…PSKDGETGLE (68 aa)).

The protein belongs to the amiloride-sensitive sodium channel (TC 1.A.6) family. SCNN1A subfamily. Heterotrimer; containing an alpha/SCNN1A, a beta/SCNN1B and a gamma/SCNN1G subunit. As to expression, the long isoform has been found in cochlea, colon, and cartilage. The short isoform is only found in cochlea.

Its subcellular location is the apical cell membrane. The protein localises to the cell projection. The protein resides in the cilium. It is found in the cytoplasmic granule. It localises to the cytoplasm. Its subcellular location is the cytoplasmic vesicle. The protein localises to the secretory vesicle. The protein resides in the acrosome. It is found in the flagellum. It carries out the reaction Na(+)(in) = Na(+)(out). With respect to regulation, originally identified and characterized by its inhibition by the diuretic drug amiloride. In terms of biological role, this is one of the three pore-forming subunits of the heterotrimeric epithelial sodium channel (ENaC), a critical regulator of sodium balance and fluid homeostasis. ENaC operates in epithelial tissues, where it mediates the electrodiffusion of sodium ions from extracellular fluid through the apical membrane of cells, with water following osmotically. The chain is Epithelial sodium channel subunit alpha from Gallus gallus (Chicken).